A 255-amino-acid polypeptide reads, in one-letter code: Small ribosomal subunit protein uS3c (255 aa).

The KH type-2 domain maps to 51–124 (IRESSNTSYG…NKNQNKNTGQ (74 aa)). The tract at residues 96 to 121 (EKNRDKNKSNKNSALDQSVNKNQNKN) is disordered. Positions 108-121 (SALDQSVNKNQNKN) are enriched in polar residues.

It belongs to the universal ribosomal protein uS3 family. In terms of assembly, part of the 30S ribosomal subunit.

It is found in the plastid. The protein resides in the chloroplast. This is Small ribosomal subunit protein uS3c (rps3) from Chaetosphaeridium globosum (Charophycean green alga).